The chain runs to 74 residues: Small ribosomal subunit protein bS18 (74 aa).

This sequence belongs to the bacterial ribosomal protein bS18 family. Part of the 30S ribosomal subunit. Forms a tight heterodimer with protein bS6.

Its function is as follows. Binds as a heterodimer with protein bS6 to the central domain of the 16S rRNA, where it helps stabilize the platform of the 30S subunit. This is Small ribosomal subunit protein bS18 from Natranaerobius thermophilus (strain ATCC BAA-1301 / DSM 18059 / JW/NM-WN-LF).